Consider the following 569-residue polypeptide: F-box/WD repeat-containing protein 5 (569 aa).

In terms of domain architecture, F-box spans 3-49 (EGGMPLLPDSLVYQIFLSLGPADVLAAGLVCRQWQAVSRDEFLWREQ). The WD 1 repeat unit spans residues 90 to 129 (EHTDQVLHLSFSHSGYQFASCSKDCTVKIWNNDLTISLLH). A Phosphoserine; by PLK4 modification is found at S151. A D-box motif is present at residues 308 to 316 (RRVFDSVLD). WD repeat units lie at residues 470–509 (TPNDECFFIFLDVSRDFVASGAEDRHGYIWDRHYNICLAK) and 511–551 (RHED…RVLQ).

It belongs to the FBXW5 family. Part of the SCF (SKP1-CUL1-F-box) E3 ubiquitin-protein ligase complex SCF(FBXW5) composed of CUL1, SKP1, RBX1 and FBXW5. Component of the DCX(FBXW5) E3 ubiquitin ligase complex, at least composed of (CUL4A or CUL4B), DDB1, FBXW5 and RBX1. Interacts with CDC20, EPS8, TSC1, TSC2 and SASS6. Interacts with TNFAIP8L1; TNFAIP8L1 competes with TSC2 to bind FBXW5 increasing TSC2 stability by preventing its ubiquitination. Phosphorylated at Ser-151 by PLK4 during the G1/S transition, leading to inhibit its ability to ubiquitinate SASS6. Post-translationally, ubiquitinated and degraded by the APC/C complex during mitosis and G1 phase.

It localises to the cytoplasm. Its pathway is protein modification; protein ubiquitination. Its function is as follows. Substrate recognition component of both SCF (SKP1-CUL1-F-box protein) and DCX (DDB1-CUL4-X-box) E3 ubiquitin-protein ligase complexes. Substrate recognition component of the SCF(FBXW5) E3 ubiquitin-protein ligase complex which mediates the ubiquitination and subsequent proteasomal degradation of SASS6 during S phase, leading to prevent centriole reduplication. The SCF(FBXW5) complex also mediates ubiquitination and degradation of actin-regulator EPS8 during G2 phase, leading to the transient degradation of EPS8 and subsequent cell shape changes required to allow mitotic progression. Substrate-specific adapter of the DCX(FBXW5) E3 ubiquitin-protein ligase complex which mediates the polyubiquitination and subsequent degradation of TSC2. May also act as a negative regulator of MAP3K7/TAK1 signaling in the interleukin-1B (IL1B) signaling pathway. The protein is F-box/WD repeat-containing protein 5 (Fbxw5) of Rattus norvegicus (Rat).